The sequence spans 142 residues: Large ribosomal subunit protein uL11 (142 aa).

It belongs to the universal ribosomal protein uL11 family. In terms of assembly, part of the ribosomal stalk of the 50S ribosomal subunit. Interacts with L10 and the large rRNA to form the base of the stalk. L10 forms an elongated spine to which L12 dimers bind in a sequential fashion forming a multimeric L10(L12)X complex. Post-translationally, one or more lysine residues are methylated.

In terms of biological role, forms part of the ribosomal stalk which helps the ribosome interact with GTP-bound translation factors. The protein is Large ribosomal subunit protein uL11 of Gamma-proteobacterium EBAC31A08.